The chain runs to 407 residues: Putative D-cysteine desulfhydrase 2, mitochondrial (407 aa).

Residues 1-34 constitute a mitochondrion transit peptide; the sequence is MRPSPALAGGGRTVANLLSATEWMLPSPATQVHT. Residues 39 to 72 are disordered; it reads PSHSPPSPPHHFAFSNLTTAPKRNGGKGEEEGRP. N6-(pyridoxal phosphate)lysine is present on Lys-90.

The protein belongs to the ACC deaminase/D-cysteine desulfhydrase family. Requires pyridoxal 5'-phosphate as cofactor.

The protein resides in the mitochondrion. The enzyme catalyses D-cysteine + H2O = hydrogen sulfide + pyruvate + NH4(+) + H(+). In terms of biological role, catalyzes the production of hydrogen sulfide (H2S) from cysteine. The polypeptide is Putative D-cysteine desulfhydrase 2, mitochondrial (Oryza sativa subsp. japonica (Rice)).